The primary structure comprises 1004 residues: Liprin-beta homolog (1004 aa).

2 stretches are compositionally biased toward low complexity: residues 50-63 (NGNS…TIGS) and 149-161 (SPPS…SSSL). 2 disordered regions span residues 50–122 (NGNS…RSSR) and 135–161 (HRTD…SSSL). Coiled coils occupy residues 280–328 (CQEL…VNQS) and 364–396 (DEMS…ALDE). 4 disordered regions span residues 341 to 366 (HTNG…DDEM), 432 to 497 (PSDS…GGNQ), 528 to 550 (NGNE…GKAS), and 648 to 686 (FSKL…LGTV). Polar residues predominate over residues 434–453 (DSMSHSTSFPVSLSSTTSNG). The span at 458 to 474 (STVQSSSSYNSSLSAVS) shows a compositional bias: low complexity. Polar residues-rich tracts occupy residues 531–541 (EGANHNYSSAS) and 648–684 (FSKL…NHLG). 3 SAM domains span residues 698-762 (WRSE…IEED), 770-833 (WDVH…LKKA), and 858-930 (VVRW…LLGP).

This sequence belongs to the liprin family. Liprin-beta subfamily. In terms of tissue distribution, expressed in pharyngeal muscle, particularly posterior bulb, adjacent to the dorsal and ventral cord (but not in ventral cord neurons), and in body wall muscles.

In terms of biological role, involved in the regulation of synaptic function at neuromuscular junctions. Together with the liprin-alpha protein syd-2, may play a role in regulating the structure of the neuronal region, called the active zone, from which synaptic vesicles send neurotransmitter signals across the synapse. Does not seem to be required for neuronal development. May regulate the disassembly of focal adhesions. Does not bind receptor-like tyrosine phosphatases type 2A. This is Liprin-beta homolog from Caenorhabditis elegans.